A 424-amino-acid polypeptide reads, in one-letter code: Probable methyltransferase EP424R (424 aa).

Residues 103–315 (QIVTNAWLKM…TYIVGKNRLR (213 aa)) enclose the Adrift-type SAM-dependent 2'-O-MTase domain. G135 and D228 together coordinate S-adenosyl-L-methionine. K268 (proton acceptor) is an active-site residue.

The protein localises to the virion. This chain is Probable methyltransferase EP424R, found in Ornithodoros (relapsing fever ticks).